A 387-amino-acid chain; its full sequence is Succinate--CoA ligase [ADP-forming] subunit beta (387 aa).

The ATP-grasp domain occupies 9–236 (KELFAKHNVP…RDATDPLELK (228 aa)). ATP contacts are provided by residues Lys45, 52–54 (GRG), Ser94, and Glu99. 2 residues coordinate Mg(2+): Asn191 and Asp205. Substrate-binding positions include Asn256 and 318-320 (GIT).

Belongs to the succinate/malate CoA ligase beta subunit family. Heterotetramer of two alpha and two beta subunits. It depends on Mg(2+) as a cofactor.

The catalysed reaction is succinate + ATP + CoA = succinyl-CoA + ADP + phosphate. It catalyses the reaction GTP + succinate + CoA = succinyl-CoA + GDP + phosphate. The protein operates within carbohydrate metabolism; tricarboxylic acid cycle; succinate from succinyl-CoA (ligase route): step 1/1. Succinyl-CoA synthetase functions in the citric acid cycle (TCA), coupling the hydrolysis of succinyl-CoA to the synthesis of either ATP or GTP and thus represents the only step of substrate-level phosphorylation in the TCA. The beta subunit provides nucleotide specificity of the enzyme and binds the substrate succinate, while the binding sites for coenzyme A and phosphate are found in the alpha subunit. The sequence is that of Succinate--CoA ligase [ADP-forming] subunit beta from Mycobacterium sp. (strain JLS).